The sequence spans 852 residues: Alanine--tRNA ligase (852 aa).

Zn(2+)-binding residues include His554, His558, Cys656, and His660.

It belongs to the class-II aminoacyl-tRNA synthetase family. Requires Zn(2+) as cofactor.

It localises to the cytoplasm. It catalyses the reaction tRNA(Ala) + L-alanine + ATP = L-alanyl-tRNA(Ala) + AMP + diphosphate. Catalyzes the attachment of alanine to tRNA(Ala) in a two-step reaction: alanine is first activated by ATP to form Ala-AMP and then transferred to the acceptor end of tRNA(Ala). Also edits incorrectly charged Ser-tRNA(Ala) and Gly-tRNA(Ala) via its editing domain. This is Alanine--tRNA ligase from Campylobacter curvus (strain 525.92).